Consider the following 471-residue polypeptide: MSKRAKVVVSPEKIKKQSDIIEELKIYNRGKNKKYMITTYGCQMNEHDSETLSGMLENMGYSITTNKEEANLIIYNTCCVRENAELKVYGNIGALKALKKKNEDLIIAVCGCMMQQPQVVKEIKRKYRHVDLVFGTHNLYRFPELLSRSMETEGMFIEVWDEETGIVEGLPANRKYDLKGFINIMYGCNNFCTYCIVPYTRGRERSREVADIIREATDLANNGTKEITLLGQNVNSYGKTLEHPIDFADLLRALNKIDGIERIRFMTSHPKDLSERLIDAIAECDKVCEHFHLPFQSGSNQILKAMNRKYTKENYLSIVKKLKDRIPNIGLTTDIIVGFPGETEEDFQDTLDIVQEARYDSAYTFLYSIREGTPAAKMQNQIDEKVKQERFSRLLDKVNEISAEINQSYLNKVVEVLVEGPSKTDSNKLMGRTRQNKLVNFSGDESLIGKLVNVRIVECRTFSLNGEVIQE.

The region spanning 33–151 (KKYMITTYGC…FPELLSRSME (119 aa)) is the MTTase N-terminal domain. Residues Cys-42, Cys-78, Cys-112, Cys-188, Cys-192, and Cys-195 each contribute to the [4Fe-4S] cluster site. Residues 174–404 (RKYDLKGFIN…LDKVNEISAE (231 aa)) enclose the Radical SAM core domain. One can recognise a TRAM domain in the interval 407-470 (QSYLNKVVEV…TFSLNGEVIQ (64 aa)).

This sequence belongs to the methylthiotransferase family. MiaB subfamily. Monomer. [4Fe-4S] cluster is required as a cofactor.

It localises to the cytoplasm. It catalyses the reaction N(6)-dimethylallyladenosine(37) in tRNA + (sulfur carrier)-SH + AH2 + 2 S-adenosyl-L-methionine = 2-methylsulfanyl-N(6)-dimethylallyladenosine(37) in tRNA + (sulfur carrier)-H + 5'-deoxyadenosine + L-methionine + A + S-adenosyl-L-homocysteine + 2 H(+). Functionally, catalyzes the methylthiolation of N6-(dimethylallyl)adenosine (i(6)A), leading to the formation of 2-methylthio-N6-(dimethylallyl)adenosine (ms(2)i(6)A) at position 37 in tRNAs that read codons beginning with uridine. The polypeptide is tRNA-2-methylthio-N(6)-dimethylallyladenosine synthase (Alkaliphilus oremlandii (strain OhILAs) (Clostridium oremlandii (strain OhILAs))).